Consider the following 214-residue polypeptide: 3-demethoxyubiquinol 3-hydroxylase (214 aa).

6 residues coordinate Fe cation: E63, E93, H96, E145, E177, and H180.

It belongs to the COQ7 family. Fe cation serves as cofactor.

The protein localises to the cell membrane. It catalyses the reaction a 5-methoxy-2-methyl-3-(all-trans-polyprenyl)benzene-1,4-diol + AH2 + O2 = a 3-demethylubiquinol + A + H2O. It participates in cofactor biosynthesis; ubiquinone biosynthesis. In terms of biological role, catalyzes the hydroxylation of 2-nonaprenyl-3-methyl-6-methoxy-1,4-benzoquinol during ubiquinone biosynthesis. The sequence is that of 3-demethoxyubiquinol 3-hydroxylase from Nitrosococcus oceani (strain ATCC 19707 / BCRC 17464 / JCM 30415 / NCIMB 11848 / C-107).